The primary structure comprises 643 residues: Clathrin interactor 1 (643 aa).

Positions 16–149 (NVVMNYSEIE…QDDDRLREER (134 aa)) constitute an ENTH domain. Arg-29 contacts a 1,2-diacyl-sn-glycero-3-phospho-(1D-myo-inositol-4,5-bisphosphate). Positions 52-54 (FMY) are interaction with VTI1B. A 1,2-diacyl-sn-glycero-3-phospho-(1D-myo-inositol-4,5-bisphosphate) is bound at residue Arg-67. Interaction with VTI1B stretches follow at residues 94–96 (SER) and 142–153 (DDRLREERKKAK). Phosphoserine is present on residues Ser-163, Ser-166, Ser-173, Ser-205, Ser-210, Ser-227, Ser-245, and Ser-299. A disordered region spans residues 219-331 (FRRKDREDSP…SSGDLVDLFD (113 aa)). The span at 222-239 (KDREDSPERCSDSDEEKK) shows a compositional bias: basic and acidic residues. A compositionally biased stretch (polar residues) spans 300–310 (PDQNASTHTPQ). Thr-308 carries the post-translational modification Phosphothreonine. The span at 311–323 (SSLKTSVPSSKSS) shows a compositional bias: low complexity. 2 positions are modified to phosphoserine: Ser-312 and Ser-642.

It belongs to the epsin family. Binds clathrin heavy chain and AP-2. Interacts with VTI1B. Interacts with GGA2 (via GAE domain). Interacts with AP1G1 (via GAE domain). Interacts with AP1G2 (via GAE domain).

The protein resides in the cytoplasm. Its subcellular location is the perinuclear region. The protein localises to the membrane. It localises to the cytoplasmic vesicle. It is found in the clathrin-coated vesicle. Its function is as follows. Binds to membranes enriched in phosphatidylinositol 4,5-bisphosphate (PtdIns(4,5)P2). May have a role in transport via clathrin-coated vesicles from the trans-Golgi network to endosomes. Stimulates clathrin assembly. The polypeptide is Clathrin interactor 1 (CLINT1) (Bos taurus (Bovine)).